Here is a 314-residue protein sequence, read N- to C-terminus: Ribosomal protein L11 methyltransferase (314 aa).

Thr166, Gly187, Asp209, and Asn251 together coordinate S-adenosyl-L-methionine.

This sequence belongs to the methyltransferase superfamily. PrmA family.

The protein resides in the cytoplasm. The catalysed reaction is L-lysyl-[protein] + 3 S-adenosyl-L-methionine = N(6),N(6),N(6)-trimethyl-L-lysyl-[protein] + 3 S-adenosyl-L-homocysteine + 3 H(+). Functionally, methylates ribosomal protein L11. The chain is Ribosomal protein L11 methyltransferase from Clostridium tetani (strain Massachusetts / E88).